The chain runs to 386 residues: 5-hydroxytryptamine receptor 1B (386 aa).

The disordered stretch occupies residues 1–25 (MEEPGARCAPPPPAGSQTQTPSSNL). At 1–42 (MEEPGARCAPPPPAGSQTQTPSSNLSHNCSADSYIYQDSIAL) the chain is on the extracellular side. The segment covering 16 to 25 (SQTQTPSSNL) has biased composition (polar residues). Residues asparagine 24 and asparagine 28 are each glycosylated (N-linked (GlcNAc...) asparagine). Residues 43-68 (PWKVLLVALLALITLATTLSNAFVIA) form a helical membrane-spanning segment. The Cytoplasmic segment spans residues 69–82 (TVYRTRKLHTPANY). The chain crosses the membrane as a helical span at residues 83–107 (LIASLAVTDLLVSILVMPISTMYTV). Residues 108–115 (TGRWTLGQ) lie on the Extracellular side of the membrane. The helical transmembrane segment at 116–141 (VVCDFWLSSDITCCTASIMHLCVIAL) threads the bilayer. A disulfide bridge connects residues cysteine 118 and cysteine 195. Residues aspartate 125 and threonine 130 each coordinate ergotamine. The DRY motif; important for ligand-induced conformation changes and signaling signature appears at 142–144 (DRY). Topologically, residues 142 to 161 (DRYWAITDAVEYSAKRTPRR) are cytoplasmic. Residues 162–180 (AAVMIALVWVFSISISLPR) traverse the membrane as a helical segment. Residues 181–201 (FFWRQAKAEEEVLDCLVNTDH) are Extracellular-facing. Position 197 (valine 197) interacts with ergotamine. A helical membrane pass occupies residues 202-225 (VLYTVYSTVGAFYLPTLLLIALYG). The Cytoplasmic portion of the chain corresponds to 226-311 (RIYVEARSRI…AARERKATKT (86 aa)). The segment at 253–272 (ISDSPGSTSSVTSINSRVPD) is disordered. Residues 254 to 268 (SDSPGSTSSVTSINS) show a composition bias toward low complexity. A helical membrane pass occupies residues 312-333 (LGIILGAFIVCWLPFFIISLVM). Residues 334 to 343 (PICKDACWFH) are Extracellular-facing. Residues 344–366 (MAIFDFFNWLGYLNSLINPIIYT) form a helical membrane-spanning segment. Residues 361 to 365 (NPIIY) carry the NPxxY motif; important for ligand-induced conformation changes and signaling motif. The Cytoplasmic segment spans residues 367–386 (MPNEDFKQAFHKLIRFKCTG). Cysteine 384 is lipidated: S-palmitoyl cysteine.

This sequence belongs to the G-protein coupled receptor 1 family. In terms of assembly, homodimer. Heterodimer with HTR1D. In terms of processing, phosphorylated. Desensitization of the receptor may be mediated by its phosphorylation. Palmitoylated.

It is found in the cell membrane. Functionally, G-protein coupled receptor for 5-hydroxytryptamine (serotonin). Also functions as a receptor for ergot alkaloid derivatives, various anxiolytic and antidepressant drugs and other psychoactive substances, such as lysergic acid diethylamide (LSD). Ligand binding causes a conformation change that triggers signaling via guanine nucleotide-binding proteins (G proteins) and modulates the activity of downstream effectors, such as adenylate cyclase. HTR1B is coupled to G(i)/G(o) G alpha proteins and mediates inhibitory neurotransmission by inhibiting adenylate cyclase activity. Arrestin family members inhibit signaling via G proteins and mediate activation of alternative signaling pathways. Regulates the release of 5-hydroxytryptamine, dopamine and acetylcholine in the brain, and thereby affects neural activity, nociceptive processing, pain perception, mood and behavior. Besides, plays a role in vasoconstriction of cerebral arteries. The protein is 5-hydroxytryptamine receptor 1B (HTR1B) of Spalax ehrenbergi (Middle East blind mole rat).